The chain runs to 218 residues: Ras-related protein Rab11D (218 aa).

GTP is bound at residue Gly-20–Ser-27. Residues Ser-42–Phe-50 carry the Effector region motif. GTP is bound by residues Asp-68 to Gln-72 and Asn-126 to Asp-129. S-geranylgeranyl cysteine attachment occurs at residues Cys-215 and Cys-216.

The protein belongs to the small GTPase superfamily. Rab family.

The protein localises to the cell membrane. The chain is Ras-related protein Rab11D (RAB11D) from Lotus japonicus (Lotus corniculatus var. japonicus).